The primary structure comprises 151 residues: UPF0178 protein Suden_0449 (151 aa).

This sequence belongs to the UPF0178 family.

This is UPF0178 protein Suden_0449 from Sulfurimonas denitrificans (strain ATCC 33889 / DSM 1251) (Thiomicrospira denitrificans (strain ATCC 33889 / DSM 1251)).